Consider the following 370-residue polypeptide: Anhydro-N-acetylmuramic acid kinase (370 aa).

An ATP-binding site is contributed by 13-20; it reads GTSMDGVD.

The protein belongs to the anhydro-N-acetylmuramic acid kinase family.

It catalyses the reaction 1,6-anhydro-N-acetyl-beta-muramate + ATP + H2O = N-acetyl-D-muramate 6-phosphate + ADP + H(+). It participates in amino-sugar metabolism; 1,6-anhydro-N-acetylmuramate degradation. Its pathway is cell wall biogenesis; peptidoglycan recycling. In terms of biological role, catalyzes the specific phosphorylation of 1,6-anhydro-N-acetylmuramic acid (anhMurNAc) with the simultaneous cleavage of the 1,6-anhydro ring, generating MurNAc-6-P. Is required for the utilization of anhMurNAc either imported from the medium or derived from its own cell wall murein, and thus plays a role in cell wall recycling. The polypeptide is Anhydro-N-acetylmuramic acid kinase (Vibrio vulnificus (strain YJ016)).